The primary structure comprises 330 residues: tRNA U34 carboxymethyltransferase (330 aa).

Carboxy-S-adenosyl-L-methionine contacts are provided by residues Lys-91, Trp-105, Lys-110, Gly-130, 152–154, 181–182, Met-196, Tyr-200, and Arg-315; these read DPS and IE.

The protein belongs to the class I-like SAM-binding methyltransferase superfamily. CmoB family. In terms of assembly, homotetramer.

It carries out the reaction carboxy-S-adenosyl-L-methionine + 5-hydroxyuridine(34) in tRNA = 5-carboxymethoxyuridine(34) in tRNA + S-adenosyl-L-homocysteine + H(+). Functionally, catalyzes carboxymethyl transfer from carboxy-S-adenosyl-L-methionine (Cx-SAM) to 5-hydroxyuridine (ho5U) to form 5-carboxymethoxyuridine (cmo5U) at position 34 in tRNAs. The protein is tRNA U34 carboxymethyltransferase of Shewanella piezotolerans (strain WP3 / JCM 13877).